Consider the following 549-residue polypeptide: Cytoplasmic trehalase (549 aa).

Substrate-binding positions include Arg-168, 175 to 176, Asn-212, 221 to 223, 292 to 294, and Gly-324; these read WD, RSQ, and RDE. Residues Asp-326 and Glu-509 each act as proton donor/acceptor in the active site. Glu-525 is a substrate binding site.

It belongs to the glycosyl hydrolase 37 family. In terms of assembly, monomer.

The protein resides in the cytoplasm. It carries out the reaction alpha,alpha-trehalose + H2O = alpha-D-glucose + beta-D-glucose. It participates in glycan degradation; trehalose degradation; D-glucose from alpha,alpha-trehalose: step 1/1. Functionally, hydrolyzes trehalose to glucose. Could be involved, in cells returning to low osmolarity conditions, in the utilization of the accumulated cytoplasmic trehalose, which was synthesized in response to high osmolarity. This chain is Cytoplasmic trehalase, found in Escherichia fergusonii (strain ATCC 35469 / DSM 13698 / CCUG 18766 / IAM 14443 / JCM 21226 / LMG 7866 / NBRC 102419 / NCTC 12128 / CDC 0568-73).